Reading from the N-terminus, the 909-residue chain is Protein translocase subunit SecA (909 aa).

ATP contacts are provided by residues glutamine 87, 105–109 (GEGKT), and aspartate 513. Residues 834 to 909 (QEEVERMEEQ…KYKQCHGKID (76 aa)) are disordered. The segment covering 836 to 853 (EVERMEEQRRAQAEEAAR) has biased composition (basic and acidic residues). The span at 854–863 (RAQAQHAAAQ) shows a compositional bias: low complexity. The segment covering 874-889 (EGAHQPMVREERKVGR) has biased composition (basic and acidic residues). Residues cysteine 893, cysteine 895, cysteine 904, and histidine 905 each contribute to the Zn(2+) site. Over residues 899–909 (KKYKQCHGKID) the composition is skewed to basic residues.

This sequence belongs to the SecA family. As to quaternary structure, monomer and homodimer. Part of the essential Sec protein translocation apparatus which comprises SecA, SecYEG and auxiliary proteins SecDF-YajC and YidC. Requires Zn(2+) as cofactor.

Its subcellular location is the cell inner membrane. The protein localises to the cytoplasm. The enzyme catalyses ATP + H2O + cellular proteinSide 1 = ADP + phosphate + cellular proteinSide 2.. Its function is as follows. Part of the Sec protein translocase complex. Interacts with the SecYEG preprotein conducting channel. Has a central role in coupling the hydrolysis of ATP to the transfer of proteins into and across the cell membrane, serving both as a receptor for the preprotein-SecB complex and as an ATP-driven molecular motor driving the stepwise translocation of polypeptide chains across the membrane. The protein is Protein translocase subunit SecA of Vibrio campbellii (strain ATCC BAA-1116).